The sequence spans 204 residues: CDP-archaeol synthase (204 aa).

A run of 6 helical transmembrane segments spans residues 5–25 (VYAC…YVIL), 43–63 (MLWV…SRLV), 91–111 (FEGF…LAYA), 116–136 (GVSA…GAFV), 147–167 (PAIL…QGLF), and 175–195 (VVVA…MAAF).

The protein belongs to the CDP-archaeol synthase family. It depends on Mg(2+) as a cofactor.

The protein localises to the cell membrane. It catalyses the reaction 2,3-bis-O-(geranylgeranyl)-sn-glycerol 1-phosphate + CTP + H(+) = CDP-2,3-bis-O-(geranylgeranyl)-sn-glycerol + diphosphate. It functions in the pathway membrane lipid metabolism; glycerophospholipid metabolism. Catalyzes the formation of CDP-2,3-bis-(O-geranylgeranyl)-sn-glycerol (CDP-archaeol) from 2,3-bis-(O-geranylgeranyl)-sn-glycerol 1-phosphate (DGGGP) and CTP. This reaction is the third ether-bond-formation step in the biosynthesis of archaeal membrane lipids. This Thermofilum pendens (strain DSM 2475 / Hrk 5) protein is CDP-archaeol synthase.